Consider the following 353-residue polypeptide: Methionine import ATP-binding protein MetN (353 aa).

Residues 8 to 249 enclose the ABC transporter domain; it reads LDQIDVTFHQ…PKQPLTQDFI (242 aa). Position 42 to 49 (42 to 49) interacts with ATP; sequence GYSGAGKS.

Belongs to the ABC transporter superfamily. Methionine importer (TC 3.A.1.24) family. As to quaternary structure, the complex is composed of two ATP-binding proteins (MetN), two transmembrane proteins (MetI) and a solute-binding protein (MetQ).

The protein localises to the cell membrane. It catalyses the reaction L-methionine(out) + ATP + H2O = L-methionine(in) + ADP + phosphate + H(+). It carries out the reaction D-methionine(out) + ATP + H2O = D-methionine(in) + ADP + phosphate + H(+). Its function is as follows. Part of the ABC transporter complex MetNIQ involved in methionine import. Responsible for energy coupling to the transport system. This Streptococcus pneumoniae serotype 4 (strain ATCC BAA-334 / TIGR4) protein is Methionine import ATP-binding protein MetN.